The chain runs to 410 residues: Argininosuccinate synthase (410 aa).

9–17 (AYSGGLDTS) lines the ATP pocket. An L-citrulline-binding site is contributed by Y86. An ATP-binding site is contributed by G116. Positions 118, 122, and 123 each coordinate L-aspartate. N122 provides a ligand contact to L-citrulline. L-citrulline contacts are provided by R126, S174, E259, and Y271.

The protein belongs to the argininosuccinate synthase family. Type 1 subfamily. As to quaternary structure, homotetramer.

The protein localises to the cytoplasm. The catalysed reaction is L-citrulline + L-aspartate + ATP = 2-(N(omega)-L-arginino)succinate + AMP + diphosphate + H(+). It functions in the pathway amino-acid biosynthesis; L-arginine biosynthesis; L-arginine from L-ornithine and carbamoyl phosphate: step 2/3. The sequence is that of Argininosuccinate synthase from Limosilactobacillus reuteri (strain DSM 20016) (Lactobacillus reuteri).